The sequence spans 100 residues: Large ribosomal subunit protein uL23 (100 aa).

The protein belongs to the universal ribosomal protein uL23 family. Part of the 50S ribosomal subunit. Contacts protein L29, and trigger factor when it is bound to the ribosome.

Its function is as follows. One of the early assembly proteins it binds 23S rRNA. One of the proteins that surrounds the polypeptide exit tunnel on the outside of the ribosome. Forms the main docking site for trigger factor binding to the ribosome. In Pseudothermotoga lettingae (strain ATCC BAA-301 / DSM 14385 / NBRC 107922 / TMO) (Thermotoga lettingae), this protein is Large ribosomal subunit protein uL23.